The sequence spans 293 residues: 33 kDa chaperonin (293 aa).

Cystine bridges form between cysteine 237–cysteine 239 and cysteine 271–cysteine 274.

The protein belongs to the HSP33 family. Post-translationally, under oxidizing conditions two disulfide bonds are formed involving the reactive cysteines. Under reducing conditions zinc is bound to the reactive cysteines and the protein is inactive.

The protein localises to the cytoplasm. Functionally, redox regulated molecular chaperone. Protects both thermally unfolding and oxidatively damaged proteins from irreversible aggregation. Plays an important role in the bacterial defense system toward oxidative stress. The chain is 33 kDa chaperonin from Haemophilus influenzae (strain PittEE).